We begin with the raw amino-acid sequence, 353 residues long: Photosystem II protein D1 (353 aa).

The residue at position 2 (Thr-2) is an N-acetylthreonine. A Phosphothreonine modification is found at Thr-2. Transmembrane regions (helical) follow at residues 29–46 (YIGW…TATS), 118–133 (HFLL…EWEL), and 142–156 (WIAV…AATA). His-118 provides a ligand contact to chlorophyll a. Tyr-126 serves as a coordination point for pheophytin a. [CaMn4O5] cluster is bound by residues Asp-170 and Glu-189. The chain crosses the membrane as a helical span at residues 197–218 (FHMLGVAGVFGGSLFSAMHGSL). His-198 lines the chlorophyll a pocket. Residues His-215 and 264 to 265 (SF) each bind a quinone. His-215 contributes to the Fe cation binding site. Position 272 (His-272) interacts with Fe cation. The helical transmembrane segment at 274–288 (FLAAWPVIGIWFTAL) threads the bilayer. Residues His-332, Glu-333, Asp-342, and Ala-344 each contribute to the [CaMn4O5] cluster site. A propeptide spanning residues 345–353 (SVEAPSVNG) is cleaved from the precursor.

This sequence belongs to the reaction center PufL/M/PsbA/D family. In terms of assembly, PSII is composed of 1 copy each of membrane proteins PsbA, PsbB, PsbC, PsbD, PsbE, PsbF, PsbH, PsbI, PsbJ, PsbK, PsbL, PsbM, PsbT, PsbX, PsbY, PsbZ, Psb30/Ycf12, at least 3 peripheral proteins of the oxygen-evolving complex and a large number of cofactors. It forms dimeric complexes. It depends on The D1/D2 heterodimer binds P680, chlorophylls that are the primary electron donor of PSII, and subsequent electron acceptors. It shares a non-heme iron and each subunit binds pheophytin, quinone, additional chlorophylls, carotenoids and lipids. D1 provides most of the ligands for the Mn4-Ca-O5 cluster of the oxygen-evolving complex (OEC). There is also a Cl(-1) ion associated with D1 and D2, which is required for oxygen evolution. The PSII complex binds additional chlorophylls, carotenoids and specific lipids. as a cofactor. Post-translationally, tyr-161 forms a radical intermediate that is referred to as redox-active TyrZ, YZ or Y-Z. C-terminally processed by CTPA; processing is essential to allow assembly of the oxygen-evolving complex and thus photosynthetic growth.

It is found in the plastid. The protein resides in the chloroplast thylakoid membrane. The catalysed reaction is 2 a plastoquinone + 4 hnu + 2 H2O = 2 a plastoquinol + O2. In terms of biological role, photosystem II (PSII) is a light-driven water:plastoquinone oxidoreductase that uses light energy to abstract electrons from H(2)O, generating O(2) and a proton gradient subsequently used for ATP formation. It consists of a core antenna complex that captures photons, and an electron transfer chain that converts photonic excitation into a charge separation. The D1/D2 (PsbA/PsbD) reaction center heterodimer binds P680, the primary electron donor of PSII as well as several subsequent electron acceptors. This chain is Photosystem II protein D1, found in Chlorokybus atmophyticus (Soil alga).